The chain runs to 60 residues: UPF0434 protein PM0859 (60 aa).

The protein belongs to the UPF0434 family.

The protein is UPF0434 protein PM0859 of Pasteurella multocida (strain Pm70).